Reading from the N-terminus, the 256-residue chain is Tyrosine-protein kinase-interacting protein (256 aa).

Acidic residues predominate over residues 1–14 (MANEGEEIELTEFP). A disordered region spans residues 1–49 (MANEGEEIELTEFPETEKERKDEEKLSSCSEETTNTSSSSGSDHVPVPI). Over 1-228 (MANEGEEIEL…DLKRLENKIN (228 aa)) the chain is Cytoplasmic. The segment covering 15–26 (ETEKERKDEEKL) has biased composition (basic and acidic residues). A compositionally biased stretch (low complexity) spans 27-42 (SSCSEETTNTSSSSGS). Tyrosine 114 is subject to Phosphotyrosine; by host LCK. Position 127 is a phosphotyrosine; by host (tyrosine 127). Residues 146–155 (EDLQSFLEKY) form a CSKH/LBD2 region. The interval 162 to 183 (PKRDLSATWDPGMPTPPLPPRP) is disordered. An SH3B/LBD1 region spans residues 174-183 (MPTPPLPPRP). The segment covering 174 to 183 (MPTPPLPPRP) has biased composition (pro residues). Residues 229 to 249 (VIICLVVVILAVLLLVTVLSI) form a helical membrane-spanning segment. At 250-256 (LHIGMKS) the chain is on the extracellular side.

As to quaternary structure, binds host LCK, human WDR48 and human NXF1/TAP. Forms a complex with activated LCK and STAT1 and STAT3. Post-translationally, phosphorylation on Tyr-114 acts as a docking site for the recruitment of STATs 1 and 3.

The protein localises to the host cell membrane. Functionally, plays a critical role in virus induced T-cell transformation. Binds to T-cell-specific tyrosine kinase LCK SH2 and SH3 domains, thereby activating its kinase activity. Once phosphorylated by host LCK, forms a complex with at least STAT 1 and 3, resulting on the phosphorylation of STAT3 and presumably STAT1, and their migration into the nucleus to induce transcription of target genes. Stimulates host ILF3/NF-AT-90 activity. Association with host NXF1/TAP transduces the signal up-regulating surface expression of adhesion molecules as well as activating NF-kappa-B activity. Acts synergistically with StpC to stimulate NF-kappa-B activity and interleukin-2 gene expression. Activation of NF-kappa-B protects lymphocytes from apoptosis, thereby facilitating viral induced cell transformation. May cause down-regulation of host LCK and cell apoptosis when stably overexpressed ex vivo. Interaction with WDR48 induce degradation of T-cell receptor in a lysosome-dependent fashion, when both proteins are overexpressed. The biological effect of this interaction remains controversial since no T-cell receptor degradation is observed in infected cells. This chain is Tyrosine-protein kinase-interacting protein, found in Saimiri sciureus (Common squirrel monkey).